A 276-amino-acid chain; its full sequence is 4-hydroxy-tetrahydrodipicolinate reductase (276 aa).

NAD(+) contacts are provided by residues 18-23 (GASGRM) and aspartate 44. Arginine 45 provides a ligand contact to NADP(+). Residues 107–109 (GTT) and 131–134 (APNM) contribute to the NAD(+) site. Histidine 164 (proton donor/acceptor) is an active-site residue. Residue histidine 165 coordinates (S)-2,3,4,5-tetrahydrodipicolinate. Catalysis depends on lysine 168, which acts as the Proton donor. 174–175 (GT) is a binding site for (S)-2,3,4,5-tetrahydrodipicolinate.

Belongs to the DapB family.

It is found in the cytoplasm. It catalyses the reaction (S)-2,3,4,5-tetrahydrodipicolinate + NAD(+) + H2O = (2S,4S)-4-hydroxy-2,3,4,5-tetrahydrodipicolinate + NADH + H(+). It carries out the reaction (S)-2,3,4,5-tetrahydrodipicolinate + NADP(+) + H2O = (2S,4S)-4-hydroxy-2,3,4,5-tetrahydrodipicolinate + NADPH + H(+). Its pathway is amino-acid biosynthesis; L-lysine biosynthesis via DAP pathway; (S)-tetrahydrodipicolinate from L-aspartate: step 4/4. In terms of biological role, catalyzes the conversion of 4-hydroxy-tetrahydrodipicolinate (HTPA) to tetrahydrodipicolinate. The sequence is that of 4-hydroxy-tetrahydrodipicolinate reductase from Aromatoleum aromaticum (strain DSM 19018 / LMG 30748 / EbN1) (Azoarcus sp. (strain EbN1)).